The following is a 128-amino-acid chain: Probable 4-amino-4-deoxy-L-arabinose-phosphoundecaprenol flippase subunit ArnF (128 aa).

Residues 1 to 10 (MKGYLWGGAS) are Cytoplasmic-facing. The helical transmembrane segment at 11-31 (VVLVTVAQLVLKWGMMNIPLL) threads the bilayer. Topologically, residues 32 to 47 (SLADINVQFLTMYFVQ) are periplasmic. Residues 48–68 (LASVMCGLMGYALSMLCWFFA) traverse the membrane as a helical segment. Residues 69 to 77 (LRYLPLNRA) are Cytoplasmic-facing. Residues 78 to 98 (YPLLSLSYALVYLGAVLLPWF) traverse the membrane as a helical segment. At 99–101 (NEP) the chain is on the periplasmic side. Residues 102–122 (ATLLKTLGAGFILLGIWLINI) form a helical membrane-spanning segment. Over 123-128 (KPIKAS) the chain is Cytoplasmic.

It belongs to the ArnF family. As to quaternary structure, heterodimer of ArnE and ArnF.

The protein resides in the cell inner membrane. Its pathway is bacterial outer membrane biogenesis; lipopolysaccharide biosynthesis. Its function is as follows. Translocates 4-amino-4-deoxy-L-arabinose-phosphoundecaprenol (alpha-L-Ara4N-phosphoundecaprenol) from the cytoplasmic to the periplasmic side of the inner membrane. This Yersinia pseudotuberculosis serotype O:1b (strain IP 31758) protein is Probable 4-amino-4-deoxy-L-arabinose-phosphoundecaprenol flippase subunit ArnF.